Here is a 714-residue protein sequence, read N- to C-terminus: Fatty acid oxidation complex subunit alpha (714 aa).

Positions Met-1–Pro-190 are enoyl-CoA hydratase. The 3-hydroxyacyl-CoA dehydrogenase stretch occupies residues Ala-306–Gln-714.

It in the N-terminal section; belongs to the enoyl-CoA hydratase/isomerase family. The protein in the central section; belongs to the 3-hydroxyacyl-CoA dehydrogenase family. As to quaternary structure, heterotetramer of two alpha chains (FadJ) and two beta chains (FadI).

Its subcellular location is the cytoplasm. The catalysed reaction is a (3S)-3-hydroxyacyl-CoA = a (2E)-enoyl-CoA + H2O. It catalyses the reaction a 4-saturated-(3S)-3-hydroxyacyl-CoA = a (3E)-enoyl-CoA + H2O. The enzyme catalyses a (3S)-3-hydroxyacyl-CoA + NAD(+) = a 3-oxoacyl-CoA + NADH + H(+). It carries out the reaction (3S)-3-hydroxybutanoyl-CoA = (3R)-3-hydroxybutanoyl-CoA. It functions in the pathway lipid metabolism; fatty acid beta-oxidation. Its function is as follows. Catalyzes the formation of a hydroxyacyl-CoA by addition of water on enoyl-CoA. Also exhibits 3-hydroxyacyl-CoA epimerase and 3-hydroxyacyl-CoA dehydrogenase activities. In Escherichia coli O7:K1 (strain IAI39 / ExPEC), this protein is Fatty acid oxidation complex subunit alpha.